Consider the following 192-residue polypeptide: Orotate phosphoribosyltransferase (192 aa).

116–124 (EDVVTTGKS) serves as a coordination point for 5-phospho-alpha-D-ribose 1-diphosphate. Residues Thr120 and Arg148 each contribute to the orotate site.

The protein belongs to the purine/pyrimidine phosphoribosyltransferase family. PyrE subfamily. Homodimer. Mg(2+) is required as a cofactor.

The catalysed reaction is orotidine 5'-phosphate + diphosphate = orotate + 5-phospho-alpha-D-ribose 1-diphosphate. Its pathway is pyrimidine metabolism; UMP biosynthesis via de novo pathway; UMP from orotate: step 1/2. Its function is as follows. Catalyzes the transfer of a ribosyl phosphate group from 5-phosphoribose 1-diphosphate to orotate, leading to the formation of orotidine monophosphate (OMP). This is Orotate phosphoribosyltransferase from Clostridium perfringens (strain ATCC 13124 / DSM 756 / JCM 1290 / NCIMB 6125 / NCTC 8237 / Type A).